A 247-amino-acid chain; its full sequence is Neurotrophic factor BDNF precursor form (247 aa).

An N-terminal signal peptide occupies residues 1–18; it reads MTILFLTMVISYFGCMKA. Residues 19–128 constitute a propeptide that is removed on maturation; the sequence is APMKEANARG…AANMSMRVRR (110 aa). Residue Asn-121 is glycosylated (N-linked (GlcNAc...) asparagine). Intrachain disulfides connect Cys-141-Cys-208, Cys-186-Cys-237, and Cys-196-Cys-239.

It belongs to the NGF-beta family. Monomers and homodimers. Binds to NTRK2/TRKB. Can form heterodimers with other neurotrophin family members, such as NTF3 and NTF4 (in vitro), but the physiological relevance of this is not clear. BDNF precursor form: interacts with the heterodimer formed by NGFR and SORCS2. Mature BDNF has much lower affinity for the heterodimer formed by NGFR and SORCS2. Post-translationally, N-glycosylated and glycosulfated, contrary to mature BDNF. Mature BDNF is produced by proteolytic removal of the propeptide, catalyzed by a FURIN family member. In addition, the precursor form is proteolytically cleaved within the propeptide, but this is not an obligatory intermediate for the production of mature BDNF. Can be converted into mature BDNF by plasmin (PLG).

The protein localises to the secreted. Functionally, important signaling molecule that activates signaling cascades downstream of NTRK2. During development, promotes the survival and differentiation of selected neuronal populations of the peripheral and central nervous systems. Participates in axonal growth, pathfinding and in the modulation of dendritic growth and morphology. Major regulator of synaptic transmission and plasticity at adult synapses in many regions of the CNS. The versatility of BDNF is emphasized by its contribution to a range of adaptive neuronal responses including long-term potentiation (LTP), long-term depression (LTD), certain forms of short-term synaptic plasticity, as well as homeostatic regulation of intrinsic neuronal excitability. Its function is as follows. Important signaling molecule that activates signaling cascades downstream of NTRK2. Activates signaling cascades via the heterodimeric receptor formed by NGFR and SORCS2. Signaling via NGFR and SORCS2 plays a role in synaptic plasticity and long-term depression (LTD). Binding to NGFR and SORCS2 promotes neuronal apoptosis. Promotes neuronal growth cone collapse. The protein is Neurotrophic factor BDNF precursor form (BDNF) of Equus caballus (Horse).